A 142-amino-acid chain; its full sequence is Ribosome maturation factor RimP (142 aa).

This sequence belongs to the RimP family.

It is found in the cytoplasm. Required for maturation of 30S ribosomal subunits. The chain is Ribosome maturation factor RimP from Aromatoleum aromaticum (strain DSM 19018 / LMG 30748 / EbN1) (Azoarcus sp. (strain EbN1)).